Reading from the N-terminus, the 240-residue chain is Probable Ni/Fe-hydrogenase B-type cytochrome subunit (240 aa).

4 consecutive transmembrane segments (helical) span residues 31–51 (LWHWVTALSIVVLGVTGYFIG), 75–95 (FAAGYVLAIGFLGRVYWAFVG), 142–163 (LAMFCFFVIGAVFMSVTGFALY), and 196–213 (LGMWYLVVFVMIHVYLAA).

Belongs to the HupC/HyaC/HydC family.

Its subcellular location is the cell membrane. In terms of biological role, probable b-type cytochrome. The protein is Probable Ni/Fe-hydrogenase B-type cytochrome subunit (hupZ) of Azotobacter chroococcum mcd 1.